Reading from the N-terminus, the 479-residue chain is Protein kinase 2 (479 aa).

The disordered stretch occupies residues 1–136; the sequence is MGKGQSKIKN…NGNDDEDEGP (136 aa). 2 stretches are compositionally biased toward low complexity: residues 52–65 and 79–96; these read AQQQ…TTAA and IPAP…TPTI. The segment covering 102 to 115 has biased composition (polar residues); it reads NTDNNNINGASNEA. The Protein kinase domain maps to 153 to 407; it reads FELLNVIGKG…GGEVKQHPWF (255 aa). ATP-binding positions include 159–167 and Lys182; that span reads IGKGSFGKV. Residue Asp276 is the Proton acceptor of the active site. At Thr309 the chain carries Phosphothreonine; by autocatalysis. In terms of domain architecture, AGC-kinase C-terminal spans 408–479; sequence KNIDWEKLDR…TYVADSILKD (72 aa). Thr470 bears the Phosphothreonine mark.

It belongs to the protein kinase superfamily. AGC Ser/Thr protein kinase family. S6 kinase subfamily. In terms of processing, seems to be myristoylated.

It is found in the cytoplasm. It localises to the cell membrane. It catalyses the reaction L-seryl-[protein] + ATP = O-phospho-L-seryl-[protein] + ADP + H(+). It carries out the reaction L-threonyl-[protein] + ATP = O-phospho-L-threonyl-[protein] + ADP + H(+). Required for morphogenesis during multicellular development. Phosphorylates talB, gefN, gefS, PI4P 5-kinase and gacQ. This Dictyostelium discoideum (Social amoeba) protein is Protein kinase 2 (pkgB).